Reading from the N-terminus, the 251-residue chain is Flap endonuclease Xni (251 aa).

Mg(2+) is bound at residue Asp-104. Residues 160–249 (VQPQQLPDYW…IDGNLQQLRL (90 aa)) form the 5'-3' exonuclease domain. Positions 171, 172, 180, 182, and 185 each coordinate K(+). An interaction with DNA region spans residues 184 to 189 (GIGPKS).

Belongs to the Xni family. Mg(2+) is required as a cofactor. It depends on K(+) as a cofactor.

Functionally, has flap endonuclease activity. During DNA replication, flap endonucleases cleave the 5'-overhanging flap structure that is generated by displacement synthesis when DNA polymerase encounters the 5'-end of a downstream Okazaki fragment. The polypeptide is Flap endonuclease Xni (Shigella flexneri serotype 5b (strain 8401)).